The primary structure comprises 191 residues: TATA-box-binding protein (191 aa).

Repeat copies occupy residues 18–94 and 108–185.

This sequence belongs to the TBP family. As to quaternary structure, belongs to the TFIID complex together with the TBP-associated factors (TAFs). Binds DNA as monomer.

Its subcellular location is the nucleus. General transcription factor that functions at the core of the DNA-binding multiprotein factor TFIID. Binding of TFIID to the TATA box is the initial transcriptional step of the pre-initiation complex (PIC), playing a role in the activation of eukaryotic genes transcribed by RNA polymerase II. This chain is TATA-box-binding protein, found in Acetabularia peniculus (Green alga).